We begin with the raw amino-acid sequence, 452 residues long: MSLPIVAIIGRPNVGKSTFVNRLAGNQQAIVHDQPGITRDRTYRPAFWRDRDFQVVDTGGLVFNDDSEFLPEIREQANLALAEAKAAIFVVDGQQGPTASDEEIAQWLRQQSVPVILAVNKCESPDQGAIQAAEFWHLGLGEPYPMSAIHGSGTGDLLDALLEYLPAPQEEPEEDEIKVAIVGRPNVGKSSLLNALTGEQRAIVSPISGTTRDAIDMVVERNGQKYRLIDTAGIRRKKNVDYGAEFFGINRAFKAIRRADVVLFVLDVLDGVTEQDLKLAGRIIEDGRAVVLVINKWDAVEKDSYTIYEHREQLMARLYFMDWAEMIFVSAQTGLRVQKILDCVDIAAQEHRRRVTTAVINEVLEEAVSWHSPPTTRQGKQGKIYYGTQVSTQPPAIALFVNDPNRFNDNYRRYIEKQFRKQLGFFGSPIRLFWRGKKVREMEGSRNRATKV.

EngA-type G domains lie at 4 to 169 (PIVA…PAPQ) and 177 to 352 (IKVA…QEHR). GTP-binding positions include 10–17 (GRPNVGKS), 57–61 (DTGGL), 120–123 (NKCE), 183–190 (GRPNVGKS), 230–234 (DTAGI), and 295–298 (NKWD). The KH-like domain occupies 353 to 439 (RRVTTAVINE…IRLFWRGKKV (87 aa)).

It belongs to the TRAFAC class TrmE-Era-EngA-EngB-Septin-like GTPase superfamily. EngA (Der) GTPase family. Associates with the 50S ribosomal subunit.

In terms of biological role, GTPase that plays an essential role in the late steps of ribosome biogenesis. The polypeptide is GTPase Der (Synechocystis sp. (strain ATCC 27184 / PCC 6803 / Kazusa)).